The primary structure comprises 523 residues: 2-isopropylmalate synthase (523 aa).

In terms of domain architecture, Pyruvate carboxyltransferase spans valine 5–tryptophan 267. Mn(2+) contacts are provided by aspartate 14, histidine 202, histidine 204, and asparagine 238. Residues arginine 392–valine 523 form a regulatory domain region.

Belongs to the alpha-IPM synthase/homocitrate synthase family. LeuA type 1 subfamily. As to quaternary structure, homodimer. Mn(2+) is required as a cofactor.

The protein localises to the cytoplasm. The enzyme catalyses 3-methyl-2-oxobutanoate + acetyl-CoA + H2O = (2S)-2-isopropylmalate + CoA + H(+). It functions in the pathway amino-acid biosynthesis; L-leucine biosynthesis; L-leucine from 3-methyl-2-oxobutanoate: step 1/4. Functionally, catalyzes the condensation of the acetyl group of acetyl-CoA with 3-methyl-2-oxobutanoate (2-ketoisovalerate) to form 3-carboxy-3-hydroxy-4-methylpentanoate (2-isopropylmalate). The chain is 2-isopropylmalate synthase from Escherichia coli (strain K12 / MC4100 / BW2952).